The following is a 291-amino-acid chain: 4-diphosphocytidyl-2-C-methyl-D-erythritol kinase (291 aa).

Lys8 is a catalytic residue. An ATP-binding site is contributed by 89 to 99 (PIGSGIGGGSS). Asp131 is a catalytic residue.

The protein belongs to the GHMP kinase family. IspE subfamily.

The catalysed reaction is 4-CDP-2-C-methyl-D-erythritol + ATP = 4-CDP-2-C-methyl-D-erythritol 2-phosphate + ADP + H(+). The protein operates within isoprenoid biosynthesis; isopentenyl diphosphate biosynthesis via DXP pathway; isopentenyl diphosphate from 1-deoxy-D-xylulose 5-phosphate: step 3/6. Functionally, catalyzes the phosphorylation of the position 2 hydroxy group of 4-diphosphocytidyl-2C-methyl-D-erythritol. This chain is 4-diphosphocytidyl-2-C-methyl-D-erythritol kinase, found in Chlamydia abortus (strain DSM 27085 / S26/3) (Chlamydophila abortus).